The following is a 334-amino-acid chain: Fe-S cluster assembly protein DRE2 (334 aa).

Positions 1-131 (MASTKTGLVL…ASIKAEPVAV (131 aa)) are N-terminal SAM-like domain. The interval 132–228 (PLRNHKKTTT…EDELVDENEM (97 aa)) is linker. The interval 135 to 229 (NHKKTTTPGT…DELVDENEMR (95 aa)) is disordered. Low complexity predominate over residues 140 to 150 (TTPGTTTTAKK). Composition is skewed to acidic residues over residues 182 to 192 (DSEDEDEESEG) and 215 to 227 (DSIEEDELVDENE). Residues Cys238, Cys249, Cys252, and Cys254 each contribute to the [2Fe-2S] cluster site. The fe-S binding site A stretch occupies residues 238 to 254 (CGKSKTRRRKACKDCTC). Residues Cys297, Cys300, Cys308, and Cys311 each contribute to the [4Fe-4S] cluster site. 2 short sequence motifs (cx2C motif) span residues 297 to 300 (CGSC) and 308 to 311 (CSGC). A fe-S binding site B region spans residues 297–311 (CGSCTLGDAFRCSGC).

This sequence belongs to the anamorsin family. Monomer. Interacts with TAH18. Interacts with MIA40. The cofactor is [2Fe-2S] cluster. It depends on [4Fe-4S] cluster as a cofactor.

The protein resides in the cytoplasm. It localises to the mitochondrion intermembrane space. Functionally, component of the cytosolic iron-sulfur (Fe-S) protein assembly (CIA) machinery required for the maturation of extramitochondrial Fe-S proteins. Part of an electron transfer chain functioning in an early step of cytosolic Fe-S biogenesis, facilitating the de novo assembly of a [4Fe-4S] cluster on the scaffold complex CFD1-NBP35. Electrons are transferred to DRE2 from NADPH via the FAD- and FMN-containing protein TAH18. TAH18-DRE2 are also required for the assembly of the diferric tyrosyl radical cofactor of ribonucleotide reductase (RNR), probably by providing electrons for reduction during radical cofactor maturation in the catalytic small subunit RNR2. The polypeptide is Fe-S cluster assembly protein DRE2 (Zygosaccharomyces rouxii (strain ATCC 2623 / CBS 732 / NBRC 1130 / NCYC 568 / NRRL Y-229)).